The following is a 102-amino-acid chain: Small ribosomal subunit protein uS10 (102 aa).

This sequence belongs to the universal ribosomal protein uS10 family. As to quaternary structure, part of the 30S ribosomal subunit.

In terms of biological role, involved in the binding of tRNA to the ribosomes. This Frankia alni (strain DSM 45986 / CECT 9034 / ACN14a) protein is Small ribosomal subunit protein uS10.